The primary structure comprises 419 residues: Light-independent protochlorophyllide reductase subunit N (419 aa).

[4Fe-4S] cluster contacts are provided by C17, C42, and C103.

This sequence belongs to the BchN/ChlN family. Protochlorophyllide reductase is composed of three subunits; ChlL, ChlN and ChlB. Forms a heterotetramer of two ChlB and two ChlN subunits. [4Fe-4S] cluster serves as cofactor.

The catalysed reaction is chlorophyllide a + oxidized 2[4Fe-4S]-[ferredoxin] + 2 ADP + 2 phosphate = protochlorophyllide a + reduced 2[4Fe-4S]-[ferredoxin] + 2 ATP + 2 H2O. It functions in the pathway porphyrin-containing compound metabolism; chlorophyll biosynthesis (light-independent). Its function is as follows. Component of the dark-operative protochlorophyllide reductase (DPOR) that uses Mg-ATP and reduced ferredoxin to reduce ring D of protochlorophyllide (Pchlide) to form chlorophyllide a (Chlide). This reaction is light-independent. The NB-protein (ChlN-ChlB) is the catalytic component of the complex. The sequence is that of Light-independent protochlorophyllide reductase subunit N from Prochlorococcus marinus (strain NATL1A).